We begin with the raw amino-acid sequence, 342 residues long: Organic solute transporter alpha-like protein 2 (342 aa).

The Extracellular portion of the chain corresponds to 1-50 (MLEISPWETLVKLLTDSLLNCTGTHEDVPHAKTFLRSLTTTYIASLAVAT). An N-linked (GlcNAc...) asparagine glycan is attached at asparagine 20. The helical transmembrane segment at 51 to 71 (AVTVGTVCLAVLHLIYIHFYI) threads the bilayer. The Cytoplasmic portion of the chain corresponds to 72 to 79 (THSSRRLH). Residues 80–100 (IVLLACTAPLVSLLALVAMYM) traverse the membrane as a helical segment. The Extracellular portion of the chain corresponds to 101 to 109 (PRVWFLSHL). The helical transmembrane segment at 110 to 130 (LSFLYFSFALWVIICLLLHIF) threads the bilayer. The Cytoplasmic portion of the chain corresponds to 131-176 (DGHHALVTKMMQRLQYVEIATPPFCCLFPCLPKVRLEGKKIRWCEL). The helical transmembrane segment at 177–197 (MVMQAPIVRLFATLVSLVIYF) threads the bilayer. Over 198–208 (EYQDQGLVPLK) the chain is Extracellular. Residues 209-229 (VLDFITLPSLLAGIYGTHILV) form a helical membrane-spanning segment. Topologically, residues 230–243 (TTVSRMDELISYRY) are cytoplasmic. A helical transmembrane segment spans residues 244–264 (VVVFRLLDFFFMVFGLQQPVF). Residues 265 to 290 (DFLARYGAFGCGTVLPAIETSFYWKN) are Extracellular-facing. A helical membrane pass occupies residues 291–311 (FFTVIEAFCVTLISTVLLQPS). Topologically, residues 312-342 (KSSFFDKHPSCRSMSSARSTITDVDTDESTT) are cytoplasmic.

It belongs to the OST-alpha family.

The protein resides in the cell membrane. In terms of biological role, probable transporter. The polypeptide is Organic solute transporter alpha-like protein 2 (osta-2) (Caenorhabditis elegans).